Here is a 132-residue protein sequence, read N- to C-terminus: Large ribosomal subunit protein bL12 (132 aa).

Over residues 102–126 the composition is skewed to basic and acidic residues; that stretch reads APKPIKEATNKDDAESIKKQLEEAG. A disordered region spans residues 102–132; sequence APKPIKEATNKDDAESIKKQLEEAGAKASVK.

The protein belongs to the bacterial ribosomal protein bL12 family. Homodimer. Part of the ribosomal stalk of the 50S ribosomal subunit. Forms a multimeric L10(L12)X complex, where L10 forms an elongated spine to which 2 to 4 L12 dimers bind in a sequential fashion. Binds GTP-bound translation factors.

In terms of biological role, forms part of the ribosomal stalk which helps the ribosome interact with GTP-bound translation factors. Is thus essential for accurate translation. This chain is Large ribosomal subunit protein bL12, found in Rippkaea orientalis (strain PCC 8801 / RF-1) (Cyanothece sp. (strain PCC 8801)).